The chain runs to 456 residues: Palmitoyltransferase PFA4 (456 aa).

At 1–9 (MAARNWSRV) the chain is on the cytoplasmic side. A helical transmembrane segment spans residues 10 to 30 (WVGGTVILISFIAFSSQIFVI). The Lumenal segment spans residues 31-37 (WPWYGRE). A helical transmembrane segment spans residues 38–58 (ISLDLLMLLVPLNLAAFMIFW). At 59-138 (NYRLCVITSP…GNCVGFYNQG (80 aa)) the chain is on the cytoplasmic side. The DHHC domain maps to 95-145 (RYCKNCAHYKPPRAHHCRQCKTCWLKLDHHCPWIGNCVGFYNQGHFIRFLL). C125 serves as the catalytic S-palmitoyl cysteine intermediate. The helical transmembrane segment at 139–159 (HFIRFLLWVDIGTTFHLIIMV) threads the bilayer. Topologically, residues 160–176 (RRVLYIAEYYHEPTLAD) are lumenal. A helical membrane pass occupies residues 177–197 (VLFLVFNFATCVPVWLCVGMF). The Cytoplasmic portion of the chain corresponds to 198 to 456 (SIYHVYLACG…DPEEESGYTH (259 aa)). The disordered stretch occupies residues 284-377 (PPQDPSRLPN…YDHYDEGPMY (94 aa)). Over residues 285–298 (PQDPSRLPNPPPIP) the composition is skewed to pro residues. A compositionally biased stretch (polar residues) spans 309–321 (NGFNPNLRPTNSL). A compositionally biased stretch (basic and acidic residues) spans 337–352 (SHEQGRHYSSGDERDN).

The protein belongs to the DHHC palmitoyltransferase family. PFA4 subfamily.

It is found in the endoplasmic reticulum membrane. It carries out the reaction L-cysteinyl-[protein] + hexadecanoyl-CoA = S-hexadecanoyl-L-cysteinyl-[protein] + CoA. Its function is as follows. Mediates the reversible addition of palmitate to target proteins, thereby regulating their membrane association and biological function. Responsible for the modification of a subset of proteins that are critical in cryptococcal pathogenesis, with substrates involved in cell wall synthesis, signal transduction, and membrane trafficking. Palmitoylates chitin synthase CHS3. In Cryptococcus neoformans var. grubii serotype A (strain H99 / ATCC 208821 / CBS 10515 / FGSC 9487) (Filobasidiella neoformans var. grubii), this protein is Palmitoyltransferase PFA4.